Reading from the N-terminus, the 315-residue chain is Tyrosine recombinase XerC (315 aa).

The Core-binding (CB) domain maps to 13-104 (ADLAAAREEW…GVRSLLRHLE (92 aa)). Positions 125–309 (SLPKPLTADD…DTQRLLEVYD (185 aa)) constitute a Tyr recombinase domain. Catalysis depends on residues arginine 168, lysine 193, histidine 261, arginine 264, and histidine 287. Residue tyrosine 296 is the O-(3'-phospho-DNA)-tyrosine intermediate of the active site.

It belongs to the 'phage' integrase family. XerC subfamily. Forms a cyclic heterotetrameric complex composed of two molecules of XerC and two molecules of XerD.

It is found in the cytoplasm. Its function is as follows. Site-specific tyrosine recombinase, which acts by catalyzing the cutting and rejoining of the recombining DNA molecules. The XerC-XerD complex is essential to convert dimers of the bacterial chromosome into monomers to permit their segregation at cell division. It also contributes to the segregational stability of plasmids. This is Tyrosine recombinase XerC from Brucella melitensis biotype 1 (strain ATCC 23456 / CCUG 17765 / NCTC 10094 / 16M).